Here is a 20-residue protein sequence, read N- to C-terminus: Juvenile hormone-binding protein (20 aa).

The protein resides in the secreted. Functionally, prevents juvenile hormone from being hydrolyzed by general esterases by combining with it specifically. The protein is Juvenile hormone-binding protein (JHBP) of Bombyx mori (Silk moth).